The chain runs to 541 residues: Halolysin-like extracellular serine protease Nep (541 aa).

The segment at residues 1-33 (MTRDTNSNVGRRSVLKAASALGAFLGLGGVASA) is a signal peptide (tat-type signal). The propeptide occupies 34–121 (TPGREPGPKK…DNATYETLEV (88 aa)). Residues 130 to 405 (QYAPQQVNCE…YGRVDAELAV (276 aa)) form the Peptidase S8 domain. Catalysis depends on charge relay system residues D157, H198, and S351. The interval 403 to 453 (LAVTTDPDNGDDDDDDDDDEDDPGDGECGDETNTATADGELSGGWGGNPSD) is disordered. The span at 410 to 432 (DNGDDDDDDDDDEDDPGDGECGD) shows a compositional bias: acidic residues.

The protein belongs to the peptidase S8 family. As to quaternary structure, monomer. Exported by the Tat system. The position of the signal peptide cleavage has not been experimentally proven. After transport across the membrane, the propeptide is probably processed autocatalytically, yielding the mature fully active protease.

Its subcellular location is the secreted. With respect to regulation, dependent on high salt concentrations for activity and stability. Strongly inhibited by the serine protease inhibitors diisopropyl fluorophosphate (DFP), phenylmethyl sulfonylfluoride (PMSF) and chymostatin. Also inhibited by denaturing agents such as SDS, urea, and HCl guanidinium. Activated by thiol-containing reducing agents such as dithiotreitol (DTT) and 2-mercaptoethanol. Its function is as follows. Serine protease that hydrolyzes large proteins such as casein and gelatin. Cleaves preferentially at the carboxyl terminus of Phe, Tyr or Leu. Is also able to catalyze peptide synthesis under different salt concentrations in the presence of dimethyl sulfoxide (DMSO). The polypeptide is Halolysin-like extracellular serine protease Nep (Natrialba magadii).